Consider the following 268-residue polypeptide: Microtubule-associated protein RP/EB family member 1 (268 aa).

Residue Ala-2 is modified to N-acetylalanine. The Calponin-homology (CH) domain maps to 14–116 (NLSRHDMLAW…FVQWFKKFFD (103 aa)). Lys-66 carries the N6-crotonyllysine modification. Tyr-124 carries the phosphotyrosine modification. The segment at 124–268 (YDPVAARQGQ…GGPQEEQEEY (145 aa)) is interaction with MTUS2/TIP150. The segment at 146-180 (LSKPKKPLGSSTAAPQRPIATQRTTAAPKAGPGMV) is disordered. The segment covering 154-170 (GSSTAAPQRPIATQRTT) has biased composition (polar residues). Ser-155 is modified (phosphoserine). An EB1 C-terminal domain is found at 185–255 (GVGNGDDEAA…LYATDEGFVI (71 aa)). An interaction with APC region spans residues 206–211 (TVEDLE). A DCTN1-binding region spans residues 208 to 268 (EDLEKERDFY…GGPQEEQEEY (61 aa)). N6-acetyllysine is present on Lys-220. An APC-binding region spans residues 220 to 242 (KLRNIELICQENEGENDPVLQRI). The interval 232 to 255 (EGENDPVLQRIVDILYATDEGFVI) is interaction with SKA1.

It belongs to the MAPRE family. As to quaternary structure, homodimer. Heterodimer with MAPRE3. Interacts (via C-terminal residues 206-211) with APC (via C-terminal residues 2674-2845); the interaction inhibits association with and bundling of F-actin. Interacts with DCTN1, DIAPH1 and DIAPH2. Interacts with DCTN2, TERF1 and dynein intermediate chain. Interacts with CLASP2, DST, KIF2C and STIM1; probably required for their targeting to the growing microtubule plus ends. Interacts with MTUS2; interaction is direct and probably targets MTUS2 to microtubules. Interacts (via C-terminus) with SKA1 (via SXIP motif); the interaction is direct and stabilizes the kinetochore-microtubule attachment of the SKA1 complex. Interacts with APC2. Interacts with CLASP1. Interacts (via C-terminus) with CLIP1. Interacts with SLAIN2 and SLAIN1. Interacts with MACF1. Interacts with KIF18B; this interaction is required for efficient accumulation of KIF18B at microtubule plus ends. Interacts with MISP. Interacts with RABL2/RABL2A; binds preferentially to GTP-bound RABL2. Interacts with KCNAB2. Interacts with KNSTRN. Interacts with NCKAP5L. Interacts with AKAP9. Interacts with PDE4DIP isoform 2/MMG8/SMYLE; this interaction is required for its recruitment to the Golgi apparatus. May form a pericentrosomal complex with AKAP9, CDK5RAP2 and PDE4DIP isoform 2/MMG8/SMYLE; within this complex, MAPRE1 binding to CDK5RAP2 may be mediated by PDE4DIP. Contrary to other mammalian species, does not interact with CDK5RAP2, possibly due to the lack of conservation of the MAPRE1-binding motif in mouse CDK5RAP2. Interacts with AKNA. Interacts with GAS2L1, GAS2L2, and GAS2L3. Interacts with RARRES1 and AGBL2. Post-translationally, acetylation at Lys-220 by KAT2B/PCAF promotes dynamic kinetochore-microtubule interactions in early mitosis. In terms of processing, crotonylated by KAT5 during mitosis, promoting astral microtubule plasticity and dynamic connection between astral microtubules and the cortex during mitotic chromosome segregation, thereby ensuring accurate spindle positioning in mitosis. Decrotonylated by HDAC3. In terms of tissue distribution, expressed within the midpiece of sperm tail (at protein level).

The protein localises to the cytoplasm. It is found in the cytoskeleton. It localises to the microtubule organizing center. The protein resides in the centrosome. Its subcellular location is the spindle. The protein localises to the spindle pole. Its function is as follows. Plus-end tracking protein (+TIP) that binds to the plus-end of microtubules and regulates the dynamics of the microtubule cytoskeleton. Recruits other +TIP proteins to microtubules by binding to a conserved Ser-X-Leu-Pro (SXLP) motif in their polypeptide chains. Promotes cytoplasmic microtubule nucleation and elongation. Involved in mitotic spindle positioning by stabilizing microtubules and promoting dynamic connection between astral microtubules and the cortex during mitotic chromosome segregation. Assists chromosome alignment in metaphase by recruiting the SKA complex to the spindle and stabilizing its interactions with microtubule bundles (K-fibers). Also acts as a regulator of minus-end microtubule organization: interacts with the complex formed by AKAP9 and PDE4DIP, leading to recruit CAMSAP2 to the Golgi apparatus, thereby tethering non-centrosomal minus-end microtubules to the Golgi, an important step for polarized cell movement. Promotes elongation of CAMSAP2-decorated microtubule stretches on the minus-end of microtubules. Acts as a regulator of autophagosome transport via interaction with CAMSAP2. Functions downstream of Rho GTPases and DIAPH1 in stable microtubule formation. May play a role in cell migration. This is Microtubule-associated protein RP/EB family member 1 (Mapre1) from Mus musculus (Mouse).